The following is a 234-amino-acid chain: uncharacterized protein (234 aa).

7 consecutive transmembrane segments (helical) span residues 25-45 (LMGA…TFFL), 57-77 (LFFL…QGLA), 85-105 (LPIF…TLLM), 108-128 (ATDI…LSVY), 142-162 (AFGV…FFAS), 163-183 (TGLT…LIAW), and 203-223 (WAIS…LFLL).

The protein belongs to the BI1 family.

The protein localises to the cell membrane. This is an uncharacterized protein from Lactococcus lactis subsp. lactis (strain IL1403) (Streptococcus lactis).